The primary structure comprises 352 residues: Probable protein phosphatase 2C 56 (352 aa).

Disordered regions lie at residues 18–37 (RGRR…ASRG) and 53–87 (SSSS…ITGG). 2 stretches are compositionally biased toward low complexity: residues 23-37 (AASP…ASRG) and 53-75 (SSSS…ARTR). Residues 96–343 (SWDYSSFKGR…DNITCIVLQF (248 aa)) enclose the PPM-type phosphatase domain. The Mn(2+) site is built by Asp132, Gly133, Asp295, and Asp334.

The protein belongs to the PP2C family. Requires Mg(2+) as cofactor. It depends on Mn(2+) as a cofactor.

The enzyme catalyses O-phospho-L-seryl-[protein] + H2O = L-seryl-[protein] + phosphate. The catalysed reaction is O-phospho-L-threonyl-[protein] + H2O = L-threonyl-[protein] + phosphate. The sequence is that of Probable protein phosphatase 2C 56 from Oryza sativa subsp. japonica (Rice).